We begin with the raw amino-acid sequence, 320 residues long: Lipoyl synthase (320 aa).

[4Fe-4S] cluster-binding residues include C56, C61, C67, C82, C86, C89, and S295. The 217-residue stretch at 68-284 folds into the Radical SAM core domain; sequence WNRRTATFMI…REEALKRGFA (217 aa). A disordered region spans residues 300-320; sequence EQSAQAVARRTGAGRAAQTGD. A compositionally biased stretch (low complexity) spans 303–320; it reads AQAVARRTGAGRAAQTGD.

It belongs to the radical SAM superfamily. Lipoyl synthase family. The cofactor is [4Fe-4S] cluster.

The protein localises to the cytoplasm. It carries out the reaction [[Fe-S] cluster scaffold protein carrying a second [4Fe-4S](2+) cluster] + N(6)-octanoyl-L-lysyl-[protein] + 2 oxidized [2Fe-2S]-[ferredoxin] + 2 S-adenosyl-L-methionine + 4 H(+) = [[Fe-S] cluster scaffold protein] + N(6)-[(R)-dihydrolipoyl]-L-lysyl-[protein] + 4 Fe(3+) + 2 hydrogen sulfide + 2 5'-deoxyadenosine + 2 L-methionine + 2 reduced [2Fe-2S]-[ferredoxin]. Its pathway is protein modification; protein lipoylation via endogenous pathway; protein N(6)-(lipoyl)lysine from octanoyl-[acyl-carrier-protein]: step 2/2. Its function is as follows. Catalyzes the radical-mediated insertion of two sulfur atoms into the C-6 and C-8 positions of the octanoyl moiety bound to the lipoyl domains of lipoate-dependent enzymes, thereby converting the octanoylated domains into lipoylated derivatives. The sequence is that of Lipoyl synthase from Symbiobacterium thermophilum (strain DSM 24528 / JCM 14929 / IAM 14863 / T).